The sequence spans 568 residues: Small ribosomal subunit protein bS1 (568 aa).

6 S1 motif domains span residues 39–100 (KTVV…LSRE), 118–184 (GEFV…VSRR), 205–273 (GMIL…LGIK), 290–360 (GKKM…LSIK), 377–447 (GTII…LGIK), and 464–533 (GTIV…LSVK).

The protein belongs to the bacterial ribosomal protein bS1 family.

Binds mRNA; thus facilitating recognition of the initiation point. It is needed to translate mRNA with a short Shine-Dalgarno (SD) purine-rich sequence. The sequence is that of Small ribosomal subunit protein bS1 (rpsA) from Rickettsia typhi (strain ATCC VR-144 / Wilmington).